The chain runs to 273 residues: NAD-dependent protein deacylase (273 aa).

Residues 1–269 form the Deacetylase sirtuin-type domain; it reads MNLDNAIHEA…PRIVEQVKKI (269 aa). Residues 25 to 44 and 107 to 110 each bind NAD(+); these read GAGVSAESGIPTFRDPGGVW and QNID. Catalysis depends on His125, which acts as the Proton acceptor. Zn(2+) is bound by residues Cys133, Cys136, Cys173, and Cys176. Residues 211-213, 237-239, and Thr255 contribute to the NAD(+) site; these read GTS and NPN.

The protein belongs to the sirtuin family. Class III subfamily. The cofactor is Zn(2+).

The protein resides in the cytoplasm. The catalysed reaction is N(6)-acetyl-L-lysyl-[protein] + NAD(+) + H2O = 2''-O-acetyl-ADP-D-ribose + nicotinamide + L-lysyl-[protein]. NAD-dependent protein deacetylase which modulates the activities of several proteins which are inactive in their acetylated form. The sequence is that of NAD-dependent protein deacylase (cobB) from Desulfosudis oleivorans (strain DSM 6200 / JCM 39069 / Hxd3) (Desulfococcus oleovorans).